The sequence spans 218 residues: MPMILGYWNVRGLTHPIRMLLEYTDSSYDEKRYTMGDAPDFDRSQWLNEKFKLGLDFPNLPYLIDGSHKITQSNAILRYLARKHHLDGETEEERIRADIVENQVMDTRMQLIMLCYNPDFEKQKPEFLKTIPEKMKLYSEFLGKRPWFAGDKVTYVDFLAYDILDQYRMFEPKCLDAFPNLRDFLARFEGLKKISAYMKSSRYIATPIFSKMAHWSNK.

The GST N-terminal domain maps to 2–88 (PMILGYWNVR…YLARKHHLDG (87 aa)). Position 7-8 (7-8 (YW)) interacts with glutathione. Thr-34 bears the Phosphothreonine mark. Glutathione contacts are provided by residues 43 to 46 (RSQW), Lys-50, and 59 to 60 (NL). Residue Ser-67 is modified to Phosphoserine. 72–73 (QS) contacts glutathione. Positions 90 to 208 (TEEERIRADI…KSSRYIATPI (119 aa)) constitute a GST C-terminal domain. Tyr-116 contributes to the substrate binding site. A Phosphoserine modification is found at Ser-210.

Homodimer.

The protein localises to the cytoplasm. It catalyses the reaction RX + glutathione = an S-substituted glutathione + a halide anion + H(+). It carries out the reaction prostaglandin A2 + glutathione = prostaglandin A2-S-(R)-glutathione. The enzyme catalyses prostaglandin J2 + glutathione = prostaglandin J2-S-(R)-glutathione. The catalysed reaction is prostaglandin J2 + glutathione = prostaglandin J2-S-(S)-glutathione. It catalyses the reaction prostaglandin A2 + glutathione = prostaglandin A2-S-(S)-glutathione. It carries out the reaction 11(S)-hydroxy-14(S),15(S)-epoxy-(5Z,8Z,12E)-eicosatrienoate + glutathione = (11S,15S)-dihydroxy-14(R)-S-glutathionyl-(5Z,8Z,12E)-eicosatrienoate. Conjugation of reduced glutathione to a wide number of exogenous and endogenous hydrophobic electrophiles. Involved in the formation of glutathione conjugates of both prostaglandin A2 (PGA2) and prostaglandin J2 (PGJ2). Participates in the formation of novel hepoxilin regioisomers. The polypeptide is Glutathione S-transferase Mu 1 (Mus musculus (Mouse)).